The chain runs to 275 residues: Fructose-2,6-bisphosphatase TIGAR (275 aa).

H11 (tele-phosphohistidine intermediate) is an active-site residue. E89 acts as the Proton donor/acceptor in catalysis.

This sequence belongs to the phosphoglycerate mutase family.

The protein resides in the cytoplasm. Its subcellular location is the nucleus. It is found in the mitochondrion. It carries out the reaction beta-D-fructose 2,6-bisphosphate + H2O = beta-D-fructose 6-phosphate + phosphate. In terms of biological role, fructose-bisphosphatase hydrolyzing fructose-2,6-bisphosphate as well as fructose-1,6-bisphosphate. Acts as a negative regulator of glycolysis by lowering intracellular levels of fructose-2,6-bisphosphate in a p53/TP53-dependent manner, resulting in the pentose phosphate pathway (PPP) activation and NADPH production. Contributes to the generation of reduced glutathione to cause a decrease in intracellular reactive oxygen species (ROS) content, correlating with its ability to protect cells from oxidative or metabolic stress-induced cell death. May play a role in mitophagy inhibition. This chain is Fructose-2,6-bisphosphatase TIGAR, found in Xenopus laevis (African clawed frog).